The following is a 1396-amino-acid chain: ABC-type transporter cicA (1396 aa).

The disordered stretch occupies residues 1–40; it reads MRLSSEAKIAESGGQPPTAGSRSETGSESTEAESADPKAQ. Positions 18 to 29 are enriched in low complexity; the sequence is TAGSRSETGSES. Helical transmembrane passes span 142–162, 191–211, and 300–320; these read FLLGGFCHLISSLLIVFAPYL, GFVVGITVMQAIQSLCTNQFL, and MFHISWTAPVSIIVALILLLV. Residues 143–466 form the ABC transmembrane type-1 1 domain; that stretch reads LLGGFCHLIS…LPLVLGQITD (324 aa). Asn-321 carries N-linked (GlcNAc...) asparagine glycosylation. 3 helical membrane-spanning segments follow: residues 324 to 344, 409 to 429, and 440 to 460; these read YSALAGFGLLVIGMPFLTYAV, ILCVSMAIPVFASMLSFITYA, and IFSSLALFNSLRMPLNLLPLV. The span at 510–533 shows a compositional bias: basic and acidic residues; the sequence is AADKEAEKVEKKANPRRTEPKSEA. The interval 510–543 is disordered; it reads AADKEAEKVEKKANPRRTEPKSEAPTDSAESDEP. In terms of domain architecture, ABC transporter 1 spans 525 to 751; the sequence is RRTEPKSEAP…NDLFKQLMST (227 aa). 563–570 is an ATP binding site; sequence GTVGSGKS. The N-linked (GlcNAc...) asparagine glycan is linked to Asn-604. The disordered stretch occupies residues 751–787; the sequence is TASQDSKEDEEEATEVVEEEAEKQAQQEPTKPAAALM. Residues 757–771 are compositionally biased toward acidic residues; it reads KEDEEEATEVVEEEA. Helical transmembrane passes span 816–836 and 852–872; these read LAILFLLAFANVVNVWTNLWL and YIGIYAGLGAGSALTMFIFST. The 278-residue stretch at 816 to 1093 folds into the ABC transmembrane type-1 2 domain; it reads LAILFLLAFA…TVRQLAEVEN (278 aa). Residue Asn-880 is glycosylated (N-linked (GlcNAc...) asparagine). Transmembrane regions (helical) follow at residues 930 to 947, 951 to 970, 1036 to 1056, and 1065 to 1085; these read MYAITITMIVSIMILIIV, YFAIALVPLFLLFLTASNYY, LSVRLDAVAVLLVFVTGVLVV, and SISGLVLSYILAIAQMLQFTV. N-linked (GlcNAc...) asparagine glycans are attached at residues Asn-1096, Asn-1150, and Asn-1154. Residues 1131-1380 form the ABC transporter 2 domain; the sequence is ITFDNVAMRY…EDGIFRAMCE (250 aa). ATP is bound at residue 1165–1172; sequence GRTGAGKS.

It belongs to the ABC transporter superfamily. ABCC family. Conjugate transporter (TC 3.A.1.208) subfamily.

It localises to the cell membrane. ABC-type transporter; part of the gene cluster that mediates the biosynthesis of cichorine, a phytotoxin active against knapweed, corn, and soybeans. CicA is probably involved in the secretion of cichorine. This is ABC-type transporter cicA from Emericella nidulans (strain FGSC A4 / ATCC 38163 / CBS 112.46 / NRRL 194 / M139) (Aspergillus nidulans).